The following is a 188-amino-acid chain: Interferon alpha-2 (188 aa).

The N-terminal stretch at 1 to 23 (MALTFALLVALLVLSCKSSCSVG) is a signal peptide. Disulfide bonds link C24–C121 and C52–C161. An O-linked (GalNAc...) threonine glycan is attached at T129.

The protein belongs to the alpha/beta interferon family. As to quaternary structure, interacts with IFNAR2.

It localises to the secreted. In terms of biological role, produced by macrophages, IFN-alpha have antiviral activities. The polypeptide is Interferon alpha-2 (IFNA2) (Homo sapiens (Human)).